A 577-amino-acid chain; its full sequence is Moesin (577 aa).

Residues proline 2 to arginine 295 enclose the FERM domain. Serine 74 carries the phosphoserine modification. Lysine 79 carries the post-translational modification N6-acetyllysine. Residue lysine 83 is modified to N6-succinyllysine. The [IL]-x-C-x-x-[DE] motif signature appears at isoleucine 115–glutamate 120. Tyrosine 116 is modified (phosphotyrosine). Cysteine 117 is modified (S-nitrosocysteine). An N6-acetyllysine mark is found at lysine 139 and lysine 165. 3 disordered regions span residues leucine 322–arginine 342, threonine 358–serine 419, and serine 468–valine 518. Over residues threonine 358–glutamate 401 the composition is skewed to basic and acidic residues. A Phosphoserine modification is found at serine 407. Basic and acidic residues predominate over residues alanine 492–valine 518. Serine 527 is subject to Phosphoserine. Threonine 558 is modified (phosphothreonine; by ROCK2 and STK10).

As to quaternary structure, in resting T-cells, part of a PAG1-NHERF1-MSN complex which is disrupted upon TCR activation. Interacts with NHERF1. Interacts with PPP1R16B. Interacts with SELPLG and SYK; these interactions mediate the activation of SYK by SELPLG. Interacts with PDPN (via cytoplasmic domain); this interaction activates RHOA and promotes epithelial-mesenchymal transition. Interacts with SPN/CD43 cytoplasmic tail. Interacts with CD44. Interacts with ICAM2. Interacts with ICAM3 (via C-terminus). Interacts with PDZD8. Interacts with F-actin. Interacts with CD46. Interacts with PTPN6. Phosphorylation on Thr-558 by STK10 negatively regulates lymphocyte migration and polarization. Phosphorylation on Thr-558 is crucial for the formation of microvilli-like structures. Phosphorylation by ROCK2 suppresses the head-to-tail association of the N-terminal and C-terminal halves resulting in an opened conformation which is capable of actin and membrane-binding. Post-translationally, S-nitrosylation of Cys-117 is induced by interferon-gamma and oxidatively-modified low-densitity lipoprotein (LDL(ox)) implicating the iNOS-S100A8/9 transnitrosylase complex.

Its subcellular location is the cell membrane. The protein resides in the cytoplasm. It is found in the cytoskeleton. It localises to the apical cell membrane. The protein localises to the cell projection. Its subcellular location is the microvillus membrane. The protein resides in the microvillus. In terms of biological role, ezrin-radixin-moesin (ERM) family protein that connects the actin cytoskeleton to the plasma membrane and thereby regulates the structure and function of specific domains of the cell cortex. Tethers actin filaments by oscillating between a resting and an activated state providing transient interactions between moesin and the actin cytoskeleton. Once phosphorylated on its C-terminal threonine, moesin is activated leading to interaction with F-actin and cytoskeletal rearrangement. These rearrangements regulate many cellular processes, including cell shape determination, membrane transport, and signal transduction. The role of moesin is particularly important in immunity acting on both T and B-cells homeostasis and self-tolerance, regulating lymphocyte egress from lymphoid organs. Modulates phagolysosomal biogenesis in macrophages. Also participates in immunologic synapse formation. The chain is Moesin from Mus musculus (Mouse).